The chain runs to 78 residues: Large ribosomal subunit protein bL28 (78 aa).

Belongs to the bacterial ribosomal protein bL28 family.

The chain is Large ribosomal subunit protein bL28 from Tropheryma whipplei (strain TW08/27) (Whipple's bacillus).